We begin with the raw amino-acid sequence, 209 residues long: ATP-dependent Clp protease proteolytic subunit (209 aa).

The Nucleophile role is filled by S106. H131 is a catalytic residue.

Belongs to the peptidase S14 family. In terms of assembly, fourteen ClpP subunits assemble into 2 heptameric rings which stack back to back to give a disk-like structure with a central cavity, resembling the structure of eukaryotic proteasomes.

The protein resides in the cytoplasm. The enzyme catalyses Hydrolysis of proteins to small peptides in the presence of ATP and magnesium. alpha-casein is the usual test substrate. In the absence of ATP, only oligopeptides shorter than five residues are hydrolyzed (such as succinyl-Leu-Tyr-|-NHMec, and Leu-Tyr-Leu-|-Tyr-Trp, in which cleavage of the -Tyr-|-Leu- and -Tyr-|-Trp bonds also occurs).. Functionally, cleaves peptides in various proteins in a process that requires ATP hydrolysis. Has a chymotrypsin-like activity. Plays a major role in the degradation of misfolded proteins. The protein is ATP-dependent Clp protease proteolytic subunit of Caulobacter vibrioides (strain ATCC 19089 / CIP 103742 / CB 15) (Caulobacter crescentus).